The primary structure comprises 132 residues: Small ribosomal subunit protein uS8 (132 aa).

Belongs to the universal ribosomal protein uS8 family. In terms of assembly, part of the 30S ribosomal subunit. Contacts proteins S5 and S12.

Its function is as follows. One of the primary rRNA binding proteins, it binds directly to 16S rRNA central domain where it helps coordinate assembly of the platform of the 30S subunit. The protein is Small ribosomal subunit protein uS8 of Clostridium acetobutylicum (strain ATCC 824 / DSM 792 / JCM 1419 / IAM 19013 / LMG 5710 / NBRC 13948 / NRRL B-527 / VKM B-1787 / 2291 / W).